A 239-amino-acid polypeptide reads, in one-letter code: ATP-dependent dethiobiotin synthetase BioD (239 aa).

22-27 is an ATP binding site; sequence GIGKTV. T26 provides a ligand contact to Mg(2+). The active site involves K47. T51 provides a ligand contact to substrate. ATP-binding positions include D59, 124 to 127, and 184 to 185; these read EGVG and NR. Mg(2+) is bound by residues D59 and E124.

The protein belongs to the dethiobiotin synthetase family. In terms of assembly, homodimer. It depends on Mg(2+) as a cofactor.

It localises to the cytoplasm. It carries out the reaction (7R,8S)-7,8-diammoniononanoate + CO2 + ATP = (4R,5S)-dethiobiotin + ADP + phosphate + 3 H(+). The protein operates within cofactor biosynthesis; biotin biosynthesis; biotin from 7,8-diaminononanoate: step 1/2. Catalyzes a mechanistically unusual reaction, the ATP-dependent insertion of CO2 between the N7 and N8 nitrogen atoms of 7,8-diaminopelargonic acid (DAPA, also called 7,8-diammoniononanoate) to form a ureido ring. The chain is ATP-dependent dethiobiotin synthetase BioD from Chlorobaculum tepidum (strain ATCC 49652 / DSM 12025 / NBRC 103806 / TLS) (Chlorobium tepidum).